Here is a 52-residue protein sequence, read N- to C-terminus: Conotoxin Cal9.2d (52 aa).

Residues 1–6 constitute a propeptide that is removed on maturation; the sequence is KRGVTL. Disulfide bonds link cysteine 14/cysteine 31, cysteine 19/cysteine 41, and cysteine 21/cysteine 46.

In terms of tissue distribution, expressed by the venom duct.

It is found in the secreted. Probable neurotoxin with unknown target. Possibly targets ion channels. The chain is Conotoxin Cal9.2d from Californiconus californicus (California cone).